A 379-amino-acid polypeptide reads, in one-letter code: Succinyl-diaminopimelate desuccinylase (379 aa).

His68 provides a ligand contact to Zn(2+). Asp70 is a catalytic residue. Asp101 is a Zn(2+) binding site. Residue Glu135 is the Proton acceptor of the active site. Glu136, Glu164, and His350 together coordinate Zn(2+).

It belongs to the peptidase M20A family. DapE subfamily. In terms of assembly, homodimer. It depends on Zn(2+) as a cofactor. Co(2+) is required as a cofactor.

The catalysed reaction is N-succinyl-(2S,6S)-2,6-diaminopimelate + H2O = (2S,6S)-2,6-diaminopimelate + succinate. It participates in amino-acid biosynthesis; L-lysine biosynthesis via DAP pathway; LL-2,6-diaminopimelate from (S)-tetrahydrodipicolinate (succinylase route): step 3/3. In terms of biological role, catalyzes the hydrolysis of N-succinyl-L,L-diaminopimelic acid (SDAP), forming succinate and LL-2,6-diaminopimelate (DAP), an intermediate involved in the bacterial biosynthesis of lysine and meso-diaminopimelic acid, an essential component of bacterial cell walls. The protein is Succinyl-diaminopimelate desuccinylase of Bordetella pertussis (strain Tohama I / ATCC BAA-589 / NCTC 13251).